The primary structure comprises 469 residues: Probable Xaa-Pro aminopeptidase PEPP (469 aa).

Mn(2+) contacts are provided by Asp-265, Asp-276, Glu-399, and Glu-439.

The protein belongs to the peptidase M24B family. It depends on Mn(2+) as a cofactor.

The catalysed reaction is Release of any N-terminal amino acid, including proline, that is linked to proline, even from a dipeptide or tripeptide.. Catalyzes the removal of a penultimate prolyl residue from the N-termini of peptides. The polypeptide is Probable Xaa-Pro aminopeptidase PEPP (PEPP) (Coccidioides posadasii (strain RMSCC 757 / Silveira) (Valley fever fungus)).